The sequence spans 303 residues: Ornithine carbamoyltransferase (303 aa).

Residues 52–55 (STRT), Gln79, Arg103, and 130–133 (HPCQ) each bind carbamoyl phosphate. Residues Asn161, Asp221, and 225 to 226 (SM) each bind L-ornithine. Residues 260-261 (CL) and Arg288 contribute to the carbamoyl phosphate site.

It belongs to the aspartate/ornithine carbamoyltransferase superfamily. OTCase family.

It localises to the cytoplasm. It catalyses the reaction carbamoyl phosphate + L-ornithine = L-citrulline + phosphate + H(+). It participates in amino-acid biosynthesis; L-arginine biosynthesis; L-arginine from L-ornithine and carbamoyl phosphate: step 1/3. Its function is as follows. Reversibly catalyzes the transfer of the carbamoyl group from carbamoyl phosphate (CP) to the N(epsilon) atom of ornithine (ORN) to produce L-citrulline. This chain is Ornithine carbamoyltransferase (argF), found in Rhizobium meliloti (strain 1021) (Ensifer meliloti).